Consider the following 273-residue polypeptide: 3-methyl-2-oxobutanoate hydroxymethyltransferase (273 aa).

Residues aspartate 53 and aspartate 92 each contribute to the Mg(2+) site. 3-methyl-2-oxobutanoate is bound by residues 53–54 (DS), aspartate 92, and lysine 122. Residue glutamate 124 coordinates Mg(2+). The active-site Proton acceptor is glutamate 191.

It belongs to the PanB family. Homodecamer; pentamer of dimers. It depends on Mg(2+) as a cofactor.

The protein resides in the cytoplasm. It carries out the reaction 3-methyl-2-oxobutanoate + (6R)-5,10-methylene-5,6,7,8-tetrahydrofolate + H2O = 2-dehydropantoate + (6S)-5,6,7,8-tetrahydrofolate. It participates in cofactor biosynthesis; (R)-pantothenate biosynthesis; (R)-pantoate from 3-methyl-2-oxobutanoate: step 1/2. Catalyzes the reversible reaction in which hydroxymethyl group from 5,10-methylenetetrahydrofolate is transferred onto alpha-ketoisovalerate to form ketopantoate. In Bacteroides fragilis (strain ATCC 25285 / DSM 2151 / CCUG 4856 / JCM 11019 / LMG 10263 / NCTC 9343 / Onslow / VPI 2553 / EN-2), this protein is 3-methyl-2-oxobutanoate hydroxymethyltransferase.